A 638-amino-acid chain; its full sequence is Chaperone protein DnaK 2 (638 aa).

Thr-199 carries the phosphothreonine; by autocatalysis modification. Residues Ala-604 to Val-626 form a disordered region. A compositionally biased stretch (low complexity) spans Glu-613 to Asp-624.

It belongs to the heat shock protein 70 family.

Functionally, acts as a chaperone. The chain is Chaperone protein DnaK 2 from Colwellia psychrerythraea (strain 34H / ATCC BAA-681) (Vibrio psychroerythus).